A 174-amino-acid chain; its full sequence is Large ribosomal subunit protein uL10 (174 aa).

Belongs to the universal ribosomal protein uL10 family. As to quaternary structure, part of the ribosomal stalk of the 50S ribosomal subunit. The N-terminus interacts with L11 and the large rRNA to form the base of the stalk. The C-terminus forms an elongated spine to which L12 dimers bind in a sequential fashion forming a multimeric L10(L12)X complex.

Its function is as follows. Forms part of the ribosomal stalk, playing a central role in the interaction of the ribosome with GTP-bound translation factors. This is Large ribosomal subunit protein uL10 from Verminephrobacter eiseniae (strain EF01-2).